A 677-amino-acid chain; its full sequence is Transcription factor IIIB 90 kDa subunit (677 aa).

A TFIIB-type zinc finger spans residues 2 to 33 (TGRVCRGCGGTDIELDAARGDAVCTACGSVLE). Zn(2+) contacts are provided by C6, C9, C25, and C28. Tandem repeats lie at residues 91–172 (RHIH…LLAR) and 185–269 (LYIP…EFED). Disordered stretches follow at residues 340-368 (KGGLASLAKDGSTEDTASSLCGEEDTEDE) and 385-413 (LLGGAPGSSEAAGSPEWGGRPPALGSLLD). T365 carries the post-translational modification Phosphothreonine. The residue at position 450 (S450) is a Phosphoserine. Disordered regions lie at residues 501–521 (YKEHKPKKSCKRREPIQASTA) and 544–653 (RGLS…EDGE). Position 553 is a phosphoserine (S553). A compositionally biased stretch (acidic residues) spans 640–653 (EEADEEEPDEEDGE).

The protein belongs to the TFIIB family. As to quaternary structure, TFIIIB comprises at least the TATA-binding protein (TBP) and the B-related factor 1 (BRF1/TFIIIB90). Interacts with BDP1. Interacts with MAF1.

The protein localises to the nucleus. General activator of RNA polymerase which utilizes different TFIIIB complexes at structurally distinct promoters. The isoform 1 is involved in the transcription of tRNA, adenovirus VA1, 7SL and 5S RNA. Isoform 2 is required for transcription of the U6 promoter. The polypeptide is Transcription factor IIIB 90 kDa subunit (BRF1) (Homo sapiens (Human)).